We begin with the raw amino-acid sequence, 416 residues long: Na(+)/H(+) antiporter NhaA (416 aa).

Transmembrane regions (helical) follow at residues 18–38 (VGGA…NSPW), 59–79 (LTLA…VAGL), 97–117 (ALPI…AAVI), 127–147 (GWAI…ALTG), 167–187 (LLAI…LWLL), 265–285 (GICV…ATVF), 297–317 (VMLG…WVAI), 333–353 (MFAL…VAEL), and 363–383 (LAKA…SALL). Positions 396-416 (ALELQPDEGDASDPSEGGSLR) are disordered.

It belongs to the NhaA Na(+)/H(+) (TC 2.A.33) antiporter family.

Its subcellular location is the cell membrane. It catalyses the reaction Na(+)(in) + 2 H(+)(out) = Na(+)(out) + 2 H(+)(in). In terms of biological role, na(+)/H(+) antiporter that extrudes sodium in exchange for external protons. The polypeptide is Na(+)/H(+) antiporter NhaA (Nocardia farcinica (strain IFM 10152)).